A 324-amino-acid chain; its full sequence is MSLRVMSPAMLNAWSQTLVRAMSTQGGAKNIGFVGLGNMGANMASNLIKAGHKLHVFDISKPACDGLAAKGATVYAKTSELAKNSDFVITMLPNNAIVDASYDEMTADGVNKDTIFIDSSTISPDLVKSLQKKISAKGARFIDAPVSGGVPGAEQATLTFMVGGTEAEYNAVKAVLECMGKKITHCGVYGMGQAAKLCNNMMLAISMIGVSEAMNLAVRQGLDANVFAEIINSSTGRCWASEIYNPVPGVCPSAPANRDYAGGFSSALITKDLGLASGVANASNSPIPLGSLAHKVYQSLCDKGLGNKDFSVVYDLMKKEKFSV.

Residues 1–25 (MSLRVMSPAMLNAWSQTLVRAMSTQ) constitute a mitochondrion transit peptide. NAD(+) contacts are provided by residues 29 to 58 (KNIG…HVFD), 92 to 93 (LP), and threonine 121. Residue lysine 196 is part of the active site. Lysine 271 contributes to the NAD(+) binding site.

Belongs to the HIBADH-related family. 3-hydroxyisobutyrate dehydrogenase subfamily.

It localises to the mitochondrion. It catalyses the reaction 3-hydroxy-2-methylpropanoate + NAD(+) = 2-methyl-3-oxopropanoate + NADH + H(+). It participates in amino-acid degradation; L-valine degradation. This Drosophila melanogaster (Fruit fly) protein is 3-hydroxyisobutyrate dehydrogenase, mitochondrial.